Consider the following 310-residue polypeptide: MKTNTTSPQKIAILGAGAWGSTLALLAQAQGHRVQVWDRRKDLDLKEVLQGSQILISAVSMAGVRPVAEVVRQVGIPPQVILVSATKGLDPLQLLTPAQIWGAAFPNQPLVVLSGPNLSAEIRQGLPAAAVVASRDLWAAVQVQHALASERFRLYTSSDPLGVELGGILKNVIAIAVGVCDALHLGTNARAALVTRGLAEMIRVGSRLGARPETFNGLSGLGDLLATCHSPLSRNYQVGYGLGQGRPLSQVLAEIEGTAEGVYTAPVVVKIAAQHNIRVPITQEVHRLLQGQTTPTAALARLMERQLTSE.

Residues tryptophan 19, arginine 39, arginine 40, and lysine 87 each contribute to the NADPH site. Sn-glycerol 3-phosphate contacts are provided by lysine 87 and glycine 115. Residue serine 119 coordinates NADPH. Lysine 170, aspartate 223, serine 233, arginine 234, and asparagine 235 together coordinate sn-glycerol 3-phosphate. Lysine 170 (proton acceptor) is an active-site residue. Residue arginine 234 coordinates NADPH. Glutamate 260 provides a ligand contact to NADPH.

Belongs to the NAD-dependent glycerol-3-phosphate dehydrogenase family.

It is found in the cytoplasm. The enzyme catalyses sn-glycerol 3-phosphate + NAD(+) = dihydroxyacetone phosphate + NADH + H(+). It carries out the reaction sn-glycerol 3-phosphate + NADP(+) = dihydroxyacetone phosphate + NADPH + H(+). It functions in the pathway membrane lipid metabolism; glycerophospholipid metabolism. Catalyzes the reduction of the glycolytic intermediate dihydroxyacetone phosphate (DHAP) to sn-glycerol 3-phosphate (G3P), the key precursor for phospholipid synthesis. This is Glycerol-3-phosphate dehydrogenase [NAD(P)+] from Synechococcus sp. (strain JA-3-3Ab) (Cyanobacteria bacterium Yellowstone A-Prime).